Reading from the N-terminus, the 278-residue chain is Ribosomal RNA small subunit methyltransferase A (278 aa).

The S-adenosyl-L-methionine site is built by Asn-25, Leu-27, Gly-52, Glu-73, Asp-97, and Asn-117.

Belongs to the class I-like SAM-binding methyltransferase superfamily. rRNA adenine N(6)-methyltransferase family. RsmA subfamily.

The protein localises to the cytoplasm. The enzyme catalyses adenosine(1518)/adenosine(1519) in 16S rRNA + 4 S-adenosyl-L-methionine = N(6)-dimethyladenosine(1518)/N(6)-dimethyladenosine(1519) in 16S rRNA + 4 S-adenosyl-L-homocysteine + 4 H(+). Its function is as follows. Specifically dimethylates two adjacent adenosines (A1518 and A1519) in the loop of a conserved hairpin near the 3'-end of 16S rRNA in the 30S particle. May play a critical role in biogenesis of 30S subunits. The sequence is that of Ribosomal RNA small subunit methyltransferase A from Desulfitobacterium hafniense (strain DSM 10664 / DCB-2).